The following is a 398-amino-acid chain: UPF0261 protein RA0729 (398 aa).

The protein belongs to the UPF0261 family.

In Rhizobium meliloti (strain 1021) (Ensifer meliloti), this protein is UPF0261 protein RA0729.